A 188-amino-acid polypeptide reads, in one-letter code: MATTSDLAKGVILRFNGNLHILEEISHHTPGNKRGFYQAKMRNLRNGRIVENKFRSGEAVEIVSTERRKHQYLYQDGLDYVMMDGDTYEQLHISNELIGEQAKFLKESMEVDLVFTTDGEIIQAEVPVFVELEVTETDPTTKDDRANSGTKPATMETGAIIQVPMFVQNGDFIRIDTRTGEYIERAKK.

The protein belongs to the elongation factor P family.

It is found in the cytoplasm. It participates in protein biosynthesis; polypeptide chain elongation. Functionally, involved in peptide bond synthesis. Stimulates efficient translation and peptide-bond synthesis on native or reconstituted 70S ribosomes in vitro. Probably functions indirectly by altering the affinity of the ribosome for aminoacyl-tRNA, thus increasing their reactivity as acceptors for peptidyl transferase. This chain is Elongation factor P, found in Chloroherpeton thalassium (strain ATCC 35110 / GB-78).